A 610-amino-acid polypeptide reads, in one-letter code: Elongation factor 4 (610 aa).

One can recognise a tr-type G domain in the interval 7–189 (SRIRNFSIIA…AIVQRIPPPK (183 aa)). Residues 19 to 24 (DHGKST) and 136 to 139 (NKID) each bind GTP.

Belongs to the TRAFAC class translation factor GTPase superfamily. Classic translation factor GTPase family. LepA subfamily.

It localises to the cell inner membrane. The catalysed reaction is GTP + H2O = GDP + phosphate + H(+). In terms of biological role, required for accurate and efficient protein synthesis under certain stress conditions. May act as a fidelity factor of the translation reaction, by catalyzing a one-codon backward translocation of tRNAs on improperly translocated ribosomes. Back-translocation proceeds from a post-translocation (POST) complex to a pre-translocation (PRE) complex, thus giving elongation factor G a second chance to translocate the tRNAs correctly. Binds to ribosomes in a GTP-dependent manner. This is Elongation factor 4 from Thermus thermophilus (strain ATCC BAA-163 / DSM 7039 / HB27).